The following is a 552-amino-acid chain: MGCSAKARWAAGALGVAGLLCAVLGAVMIVMVPSLIKQQVLKNVRIDPSSLSFNMWKEIPIPFYLSVYFFDVMNPSEILKGEKPQVRERGPYVYREFRHKSNITFNNNDTVSFLEYRTFQFQPSKSHGSESDYIVMPNILVLGAAVMMENKPMTLKLIMTLAFTTLGERAFMNRTVGEIMWGYKDPLVNLINKYFPGMFPFKDKFGLFAELNNSDSGLFTVFTGVQNISRIHLVDKWNGLSKVDFWHSDQCNMINGTSGQMWPPFMTPESSLEFYSPEACRSMKLMYKESGVFEGIPTYRFVAPKTLFANGSIYPPNEGFCPCLESGIQNVSTCRFSAPLFLSHPHFLNADPVLAEAVTGLHPNQEAHSLFLDIHPVTGIPMNCSVKLQLSLYMKSVAGIGQTGKIEPVVLPLLWFAESGAMEGETLHTFYTQLVLMPKVMHYAQYVLLALGCVLLLVPVICQIRSQVGAGQRAARADSHSLACWGKGASDRTLWPTAAWSPPPAAVLRLCRSGSGHCWGLRSTLASFACRVATTLPVLEGLGPSLGGGTGS.

The Cytoplasmic portion of the chain corresponds to 1 to 11 (MGCSAKARWAA). A helical membrane pass occupies residues 12–32 (GALGVAGLLCAVLGAVMIVMV). Residues 33–443 (PSLIKQQVLK…LVLMPKVMHY (411 aa)) are Extracellular-facing. Asn102, Asn108, Asn173, Asn212, Asn227, Asn255, Asn310, Asn330, and Asn383 each carry an N-linked (GlcNAc...) asparagine glycan. Cys251 and Cys384 are joined by a disulfide. Phosphoserine occurs at positions 393 and 458. The helical transmembrane segment at 444-464 (AQYVLLALGCVLLLVPVICQI) threads the bilayer. Residue Cys462 is the site of S-palmitoyl cysteine attachment. Over 465–552 (RSQVGAGQRA…GPSLGGGTGS (88 aa)) the chain is Cytoplasmic. The residue at position 493 (Thr493) is a Phosphoserine.

The protein belongs to the CD36 family. The C-terminal region binds to PDZK1. As to quaternary structure, (Microbial infection) Interacts with hepatitis C virus E1:E2 glycoproteins. N-glycosylated. Post-translationally, the six cysteines of the extracellular domain are all involved in intramolecular disulfide bonds. As to expression, widely expressed.

It is found in the cell membrane. The protein localises to the membrane. The protein resides in the caveola. Its function is as follows. Receptor for different ligands such as phospholipids, cholesterol ester, lipoproteins, phosphatidylserine and apoptotic cells. Receptor for HDL, mediating selective uptake of cholesteryl ether and HDL-dependent cholesterol efflux. Also facilitates the flux of free and esterified cholesterol between the cell surface and apoB-containing lipoproteins and modified lipoproteins, although less efficiently than HDL. May be involved in the phagocytosis of apoptotic cells, via its phosphatidylserine binding activity. (Microbial infection) Acts as a receptor for hepatitis C virus in hepatocytes and appears to facilitate its cell entry. Binding between SCARB1 and the hepatitis C virus glycoprotein E2 is independent of the genotype of the viral isolate. In terms of biological role, (Microbial infection) Mediates uptake of M.fortuitum, E.coli and S.aureus. Functionally, (Microbial infection) Facilitates the entry of human coronavirus SARS-CoV-2 by acting as an entry cofactor through HDL binding. The chain is Scavenger receptor class B member 1 (SCARB1) from Homo sapiens (Human).